Reading from the N-terminus, the 94-residue chain is uncharacterized protein (94 aa).

To M.tuberculosis Rv2632c.

This is an uncharacterized protein from Mycobacterium tuberculosis (strain CDC 1551 / Oshkosh).